Reading from the N-terminus, the 269-residue chain is Shikimate dehydrogenase (NADP(+)) (269 aa).

Shikimate is bound by residues 22 to 24 (TLS) and threonine 68. Residue lysine 72 is the Proton acceptor of the active site. Asparagine 93 and aspartate 104 together coordinate shikimate. NADP(+)-binding positions include 128 to 132 (GAGGA), 152 to 157 (NRTNLR), and phenylalanine 210. Residue tyrosine 212 participates in shikimate binding. Glycine 233 is an NADP(+) binding site.

It belongs to the shikimate dehydrogenase family. In terms of assembly, homodimer.

It carries out the reaction shikimate + NADP(+) = 3-dehydroshikimate + NADPH + H(+). Its pathway is metabolic intermediate biosynthesis; chorismate biosynthesis; chorismate from D-erythrose 4-phosphate and phosphoenolpyruvate: step 4/7. Functionally, involved in the biosynthesis of the chorismate, which leads to the biosynthesis of aromatic amino acids. Catalyzes the reversible NADPH linked reduction of 3-dehydroshikimate (DHSA) to yield shikimate (SA). The sequence is that of Shikimate dehydrogenase (NADP(+)) from Saccharolobus islandicus (strain L.S.2.15 / Lassen #1) (Sulfolobus islandicus).